Here is a 631-residue protein sequence, read N- to C-terminus: MEGVLQTRGLLSLPSKPKIKAFYPLPQGGLRNRFNSLSSLKPNPLNGVSLSSNGFQKVQGFDTKPQLFGQKKRCFPICKAEAAAAAGAADGQPLFVEKEQPKFMGIELVTLKKIIPLGAMFFCILFNYTILRDTKDVLVVTAKGSSAEIIPFLKTWVNLPMAIGFMLLYTKLANVLSKEALFYTVILPFIAFFGAFGFVLYPLSNYFHPTAFADKLLNTLGPRFLGPIAILRIWSFCLFYVMAELWGSVVVSVLFWGFANQITTVDEAKRFYPLFGLGANVALIFSGRTVKYFSSLRSSLGPGVDGWAISLKGMMSIVVMMGGAICFFYWWVNRNVALPTRSKKKKVKPNMTTMESLKFLVSSKYIRDLATLVVAYGISINLVEVTWKSKLKAQFPSPNEYSSFMGDFSTATGIATFTMMLLSQWIFDKYGWGAAAKITPTVLLLTGVGFFSLLLFGAPLAPTLAKFGMTPLLAAVYVGAMQNIFSKSAKYSLFDPCKEMAYIPLDEDTKVKGKAAIDVVCNPLGKSGGALIQQFMILTFGSLASSTPYLGGVLLVIVLAWLGAAKSLDGQFTQLRQEEDLEKEMERASLKIPVVSQNENGNGPLSSESSLNPAGGDSTNASSEPSSPRSL.

11 consecutive transmembrane segments (helical) span residues 106–126 (IELV…CILF), 149–169 (IIPF…MLLY), 180–200 (ALFY…GFVL), 238–258 (LFYV…FWGF), 271–290 (FYPL…GRTV), 313–333 (GMMS…WWVN), 369–389 (LATL…TWKS), 407–427 (DFST…QWIF), 442–462 (VLLL…PLAP), 465–485 (AKFG…QNIF), and 543–563 (LASS…AWLG). Positions 586–631 (ERASLKIPVVSQNENGNGPLSSESSLNPAGGDSTNASSEPSSPRSL) are disordered. Residues 595 to 631 (VSQNENGNGPLSSESSLNPAGGDSTNASSEPSSPRSL) are compositionally biased toward polar residues.

The protein belongs to the ADP/ATP translocase tlc (TC 2.A.12.2) family.

Its subcellular location is the plastid. It localises to the chloroplast membrane. This Solanum tuberosum (Potato) protein is Plastidic ATP/ADP-transporter.